The following is a 674-amino-acid chain: L-type lectin-domain containing receptor kinase IV.3 (674 aa).

Residues methionine 1–serine 22 form the signal peptide. N-linked (GlcNAc...) asparagine glycosylation is found at asparagine 21, asparagine 28, asparagine 40, asparagine 81, asparagine 136, and asparagine 188. Residues serine 23–arginine 296 lie on the Extracellular side of the membrane. The segment at serine 26 to phenylalanine 263 is legume-lectin like. The helical transmembrane segment at methionine 297–valine 317 threads the bilayer. Topologically, residues arginine 318–arginine 674 are cytoplasmic. Residues phenylalanine 355–leucine 632 enclose the Protein kinase domain. ATP contacts are provided by residues leucine 361 to valine 369 and lysine 384. Aspartate 480 functions as the Proton acceptor in the catalytic mechanism.

It in the C-terminal section; belongs to the protein kinase superfamily. Ser/Thr protein kinase family. This sequence in the N-terminal section; belongs to the leguminous lectin family.

It is found in the cell membrane. The catalysed reaction is L-seryl-[protein] + ATP = O-phospho-L-seryl-[protein] + ADP + H(+). It carries out the reaction L-threonyl-[protein] + ATP = O-phospho-L-threonyl-[protein] + ADP + H(+). This chain is L-type lectin-domain containing receptor kinase IV.3 (LECRK43), found in Arabidopsis thaliana (Mouse-ear cress).